The chain runs to 628 residues: Neutral/alkaline invertase 1, mitochondrial (628 aa).

The N-terminal 35 residues, 1-35, are a transit peptide targeting the mitochondrion; sequence MAAAAISHLRRGAPRHARALLYLSTRRFSSSSAAG. The span at 79–90 shows a compositional bias: low complexity; the sequence is ASSAPPLESPPI. Positions 79–113 are disordered; that stretch reads ASSAPPLESPPIEELPDDATPPPEEEPGLPAPEKD.

This sequence belongs to the glycosyl hydrolase 100 family. As to expression, expressed in roots, leaf and stems.

Its subcellular location is the mitochondrion. It catalyses the reaction Hydrolysis of terminal non-reducing beta-D-fructofuranoside residues in beta-D-fructofuranosides.. Its function is as follows. Mitochondrial invertase that cleaves sucrose into glucose and fructose. This Oryza sativa subsp. japonica (Rice) protein is Neutral/alkaline invertase 1, mitochondrial.